Reading from the N-terminus, the 99-residue chain is Spanin, outer lipoprotein subunit (99 aa).

Positions Met1–Gly16 are cleaved as a signal peptide. The N-palmitoyl cysteine; by host moiety is linked to residue Cys17. Cys17 is lipidated: S-diacylglycerol cysteine; by host. The Periplasmic portion of the chain corresponds to Ser18–Lys99.

In terms of assembly, interacts (via C-terminus) with the spanin inner membrane subunit (via C-terminus). Part of the spanin complex which spans the entire periplasmic space. The spanin complex is composed of spanin inner membrane subunit and spanin outer membrane subunit.

Its subcellular location is the host cell outer membrane. Component of the spanin complex that disrupts the host outer membrane and participates in cell lysis during virus exit. The spanin complex conducts the final step in host lysis by disrupting the outer membrane after holin and endolysin action have permeabilized the inner membrane and degraded the host peptidoglycans. Host outer membrane disruption is possibly due to local fusion between the inner and outer membrane performed by the spanin complex. The polypeptide is Spanin, outer lipoprotein subunit (y13J) (Escherichia coli (Bacteriophage T4)).